Reading from the N-terminus, the 101-residue chain is Small ribosomal subunit protein uS14 (101 aa).

It belongs to the universal ribosomal protein uS14 family. Part of the 30S ribosomal subunit. Contacts proteins S3 and S10.

Its function is as follows. Binds 16S rRNA, required for the assembly of 30S particles and may also be responsible for determining the conformation of the 16S rRNA at the A site. The polypeptide is Small ribosomal subunit protein uS14 (Bordetella petrii (strain ATCC BAA-461 / DSM 12804 / CCUG 43448)).